The primary structure comprises 43 residues: Potassium channel toxin gamma-KTx 4.4 (43 aa).

4 disulfide bridges follow: cysteine 5-cysteine 23, cysteine 11-cysteine 34, cysteine 20-cysteine 39, and cysteine 24-cysteine 41.

Belongs to the ergtoxin family. Gamma-KTx 4 subfamily. As to expression, expressed by the venom gland.

The protein resides in the secreted. Reversibly blocks Kv11/ERG potassium channels. The sequence is that of Potassium channel toxin gamma-KTx 4.4 from Centruroides exilicauda (Bark scorpion).